A 333-amino-acid polypeptide reads, in one-letter code: UPF0285 protein MTH_1441 (333 aa).

It belongs to the UPF0285 family.

The sequence is that of UPF0285 protein MTH_1441 from Methanothermobacter thermautotrophicus (strain ATCC 29096 / DSM 1053 / JCM 10044 / NBRC 100330 / Delta H) (Methanobacterium thermoautotrophicum).